The following is a 545-amino-acid chain: ATP synthase subunit alpha (545 aa).

173 to 180 serves as a coordination point for ATP; sequence GDRQTGKT.

Belongs to the ATPase alpha/beta chains family. In terms of assembly, F-type ATPases have 2 components, CF(1) - the catalytic core - and CF(0) - the membrane proton channel. CF(1) has five subunits: alpha(3), beta(3), gamma(1), delta(1), epsilon(1). CF(0) has three main subunits: a(1), b(2) and c(9-12). The alpha and beta chains form an alternating ring which encloses part of the gamma chain. CF(1) is attached to CF(0) by a central stalk formed by the gamma and epsilon chains, while a peripheral stalk is formed by the delta and b chains.

It localises to the cell membrane. The catalysed reaction is ATP + H2O + 4 H(+)(in) = ADP + phosphate + 5 H(+)(out). Functionally, produces ATP from ADP in the presence of a proton gradient across the membrane. The alpha chain is a regulatory subunit. The polypeptide is ATP synthase subunit alpha (Leifsonia xyli subsp. xyli (strain CTCB07)).